The sequence spans 368 residues: MVPWRRSSSSSSAPSSRPARRPARTNARVSPDVSSELSPLAGEEGAGEERWSALVPDLLADILRCVEAGSERWPPRRDVVACASVCRRWRDVAVAVVQPPLESGKITFPSSLKQPGPRDAPMQCFIKRNKKNSTFFLYLGLTQELTDDEKFLLAARRCRRGLHKEYAITINSDGLFHGSQSCVGNLKSNFTGTKFTIRDWQPPYEGAKAFSSRSGRWFGNKHRCPLVSTGDVEVGEVSYKYSLLRPRGPRRMSCSVQCPVLKGTAVDPQDGKRLSNSIPSSLVLNSKVPSWHEHLQCWCLNFHGRVMVASVKNFQLIAPVEPGEPSDKTVVLQFGKIDDDVFTMDYRQPLSAFQAFAICLSNFGTKLA.

Over residues methionine 1–arginine 17 the composition is skewed to low complexity. The segment at methionine 1–glutamate 44 is disordered. The region spanning glutamate 49–glycine 104 is the F-box domain.

It belongs to the TUB family. Expressed in stems, leaves, flowers and seeds.

The protein is Tubby-like F-box protein 2 (TULP2) of Oryza sativa subsp. japonica (Rice).